The chain runs to 244 residues: Putative quercetin 2,3-dioxygenase Mb0187c (244 aa).

4 residues coordinate a divalent metal cation: H60, H62, H104, and E106.

This sequence belongs to the pirin family. It depends on a divalent metal cation as a cofactor.

It catalyses the reaction quercetin + O2 = 2-(3,4-dihydroxybenzoyloxy)-4,6-dihydroxybenzoate + CO. It functions in the pathway flavonoid metabolism; quercetin degradation. Functionally, putative quercetin 2,3-dioxygenase. In Mycobacterium bovis (strain ATCC BAA-935 / AF2122/97), this protein is Putative quercetin 2,3-dioxygenase Mb0187c.